A 370-amino-acid polypeptide reads, in one-letter code: Coproporphyrin III ferrochelatase (370 aa).

Residues Ser-58 and Tyr-127 each contribute to the Fe-coproporphyrin III site. Positions 189 and 276 each coordinate Fe(2+).

Belongs to the ferrochelatase family.

Its subcellular location is the cytoplasm. The enzyme catalyses Fe-coproporphyrin III + 2 H(+) = coproporphyrin III + Fe(2+). It functions in the pathway porphyrin-containing compound metabolism; protoheme biosynthesis. Involved in coproporphyrin-dependent heme b biosynthesis. Catalyzes the insertion of ferrous iron into coproporphyrin III to form Fe-coproporphyrin III. The chain is Coproporphyrin III ferrochelatase from Corynebacterium glutamicum (strain ATCC 13032 / DSM 20300 / JCM 1318 / BCRC 11384 / CCUG 27702 / LMG 3730 / NBRC 12168 / NCIMB 10025 / NRRL B-2784 / 534).